Here is a 428-residue protein sequence, read N- to C-terminus: Serine--tRNA ligase (428 aa).

231–233 (TAE) lines the L-serine pocket. Residues 262–264 (RRE) and V278 contribute to the ATP site. Position 285 (E285) interacts with L-serine. 349 to 352 (EVSS) lines the ATP pocket. S384 contributes to the L-serine binding site.

It belongs to the class-II aminoacyl-tRNA synthetase family. Type-1 seryl-tRNA synthetase subfamily. As to quaternary structure, homodimer. The tRNA molecule binds across the dimer.

The protein localises to the cytoplasm. The catalysed reaction is tRNA(Ser) + L-serine + ATP = L-seryl-tRNA(Ser) + AMP + diphosphate + H(+). It catalyses the reaction tRNA(Sec) + L-serine + ATP = L-seryl-tRNA(Sec) + AMP + diphosphate + H(+). It participates in aminoacyl-tRNA biosynthesis; selenocysteinyl-tRNA(Sec) biosynthesis; L-seryl-tRNA(Sec) from L-serine and tRNA(Sec): step 1/1. Catalyzes the attachment of serine to tRNA(Ser). Is also able to aminoacylate tRNA(Sec) with serine, to form the misacylated tRNA L-seryl-tRNA(Sec), which will be further converted into selenocysteinyl-tRNA(Sec). The chain is Serine--tRNA ligase from Chlamydia muridarum (strain MoPn / Nigg).